Consider the following 513-residue polypeptide: Ankyrin repeat domain-containing protein 13C-B (513 aa).

Basic and acidic residues predominate over residues 1-19; sequence MTGEKIRSLHRDQKPSKDE. 2 disordered regions span residues 1–34 and 55–77; these read MTGE…DGTF and PSNP…PMTP. A compositionally biased stretch (acidic residues) spans 20-29; the sequence is DLLEPDEEAT. ANK repeat units lie at residues 83 to 114, 115 to 144, and 148 to 177; these read DVYF…QKDN, HGNT…PVKV, and QGWS…QQSR.

The protein localises to the endoplasmic reticulum membrane. In terms of biological role, acts as a molecular chaperone for G protein-coupled receptors, regulating their biogenesis and exit from the ER. The chain is Ankyrin repeat domain-containing protein 13C-B (ankrd13c-b) from Xenopus laevis (African clawed frog).